The following is a 966-amino-acid chain: Regulator of telomere elongation helicase 1 homolog (966 aa).

One can recognise a Helicase ATP-binding domain in the interval 7–284; the sequence is AGIPVHFPFE…QDMAGDEPKD (278 aa). 42 to 49 provides a ligand contact to ATP; sequence SPTGTGKT. Residues Cys-146, Cys-164, Cys-173, and Cys-209 each contribute to the [4Fe-4S] cluster site. A DEAH box motif is present at residues 233–236; that stretch reads DEAH. Residues 844–864 form a disordered region; that stretch reads VKIHKRERSSPTAPESTSQVS. Residues 853-863 show a composition bias toward polar residues; the sequence is SPTAPESTSQV. Phosphothreonine is present on Thr-855.

The protein belongs to the helicase family. RAD3/XPD subfamily.

The protein localises to the nucleus. The enzyme catalyses ATP + H2O = ADP + phosphate + H(+). In terms of biological role, a probable ATP-dependent DNA helicase implicated in DNA repair and the maintenance of genomic stability. Acts as an anti-recombinase to counteract toxic recombination and limit crossover during meiosis. Regulates meiotic recombination and crossover homeostasis by physically dissociating strand invasion events and thereby promotes noncrossover repair by meiotic synthesis dependent strand annealing (SDSA) as well as disassembly of D loop recombination intermediates. This is Regulator of telomere elongation helicase 1 homolog from Drosophila sechellia (Fruit fly).